A 252-amino-acid chain; its full sequence is MITKRIIPCLDVKDGRVVKGVQFVQLRDAGDPVELAKAYDEQGADELVFLDISASHEGRKTMVDVVERVAAQLAIPFTVGGGIHSLEDMKRMLRAGADKVSLNTAAVLHPTLITEGADFFGSQCIVVAIDAKYDETLGSWRVYTHGGRNATNWEVVAWAQEAVRLGAGEILLTSMDADGGKNGFDIELTRRVSEAVPVPVIASGGAGKAEHFLEAFEKGKADAALAASIFHYKETSVGQVKAYLKEKGVNVR.

Catalysis depends on residues D11 and D130.

This sequence belongs to the HisA/HisF family. In terms of assembly, heterodimer of HisH and HisF.

The protein resides in the cytoplasm. The catalysed reaction is 5-[(5-phospho-1-deoxy-D-ribulos-1-ylimino)methylamino]-1-(5-phospho-beta-D-ribosyl)imidazole-4-carboxamide + L-glutamine = D-erythro-1-(imidazol-4-yl)glycerol 3-phosphate + 5-amino-1-(5-phospho-beta-D-ribosyl)imidazole-4-carboxamide + L-glutamate + H(+). It functions in the pathway amino-acid biosynthesis; L-histidine biosynthesis; L-histidine from 5-phospho-alpha-D-ribose 1-diphosphate: step 5/9. In terms of biological role, IGPS catalyzes the conversion of PRFAR and glutamine to IGP, AICAR and glutamate. The HisF subunit catalyzes the cyclization activity that produces IGP and AICAR from PRFAR using the ammonia provided by the HisH subunit. This chain is Imidazole glycerol phosphate synthase subunit HisF, found in Geobacillus kaustophilus (strain HTA426).